Here is a 169-residue protein sequence, read N- to C-terminus: Phosphopantetheine adenylyltransferase (169 aa).

Residue Thr9 participates in substrate binding. ATP-binding positions include 9–10 (TF) and His17. Lys41, Leu73, and Arg87 together coordinate substrate. Residues 88–90 (GLR), Glu98, and 123–129 (YQFISGT) contribute to the ATP site.

It belongs to the bacterial CoaD family. Homohexamer. The cofactor is Mg(2+).

The protein localises to the cytoplasm. It carries out the reaction (R)-4'-phosphopantetheine + ATP + H(+) = 3'-dephospho-CoA + diphosphate. The protein operates within cofactor biosynthesis; coenzyme A biosynthesis; CoA from (R)-pantothenate: step 4/5. Reversibly transfers an adenylyl group from ATP to 4'-phosphopantetheine, yielding dephospho-CoA (dPCoA) and pyrophosphate. This is Phosphopantetheine adenylyltransferase from Bordetella bronchiseptica (strain ATCC BAA-588 / NCTC 13252 / RB50) (Alcaligenes bronchisepticus).